A 793-amino-acid chain; its full sequence is Ribosome biogenesis protein BOP1 homolog (793 aa).

Over residues 1-11 the composition is skewed to basic residues; the sequence is MTKKLTLKRKG. Residues 1–168 are disordered; sequence MTKKLTLKRK…DSDTSDEEDI (168 aa). Composition is skewed to acidic residues over residues 44 to 53, 60 to 72, and 83 to 116; these read EDTTDDEGID, SSED…DEEG, and SSEE…DGDE. Positions 117–129 are enriched in basic and acidic residues; that stretch reads EKPTTSKQNKSED. Polar residues predominate over residues 133–143; sequence SSKVSKKTQPP. The segment covering 146 to 161 has biased composition (basic and acidic residues); sequence DLVKRDPSHPEYHDSD. WD repeat units follow at residues 454–495, 497–535, 579–621, 624–662, 665–704, 708–747, and 763–793; these read GHTD…RTIE, EDVV…KVLV, NHFK…SQIP, KSKG…LVKK, TNSK…KPYQ, LHRN…DLLQ, and REDF…RLYT.

The protein belongs to the WD repeat BOP1/ERB1 family.

Its subcellular location is the nucleus. It localises to the nucleolus. The protein resides in the nucleoplasm. Functionally, required for maturation of ribosomal RNAs and formation of the large ribosomal subunit. In Drosophila ananassae (Fruit fly), this protein is Ribosome biogenesis protein BOP1 homolog.